The primary structure comprises 27 residues: Toxin TdII-4 (27 aa).

Positions 1–27 constitute an LCN-type CS-alpha/beta domain; it reads KDGYLMEPNGCKLGCLTRPAKYCWXEE.

It belongs to the long (4 C-C) scorpion toxin superfamily. Sodium channel inhibitor family. Beta subfamily. In terms of tissue distribution, expressed by the venom gland.

The protein resides in the secreted. In terms of biological role, beta toxins bind voltage-independently at site-4 of sodium channels (Nav) and shift the voltage of activation toward more negative potentials thereby affecting sodium channel activation and promoting spontaneous and repetitive firing. This toxin is active against mammals and also affects neuromuscular preparations of frog. The protein is Toxin TdII-4 of Tityus discrepans (Venezuelan scorpion).